The primary structure comprises 450 residues: Putative zinc metalloprotease PA3649 (450 aa).

Histidine 21 is a Zn(2+) binding site. Glutamate 22 is an active-site residue. Residue histidine 25 participates in Zn(2+) binding. Residues 97-119 (IAIVAAGPIANFLLAILFFWVVA) traverse the membrane as a helical segment. One can recognise a PDZ domain in the interval 199–291 (GWLKGEDNPD…VLDVALELAV (93 aa)). A helical transmembrane segment spans residues 425–444 (AWGMQIGISLVVGVMLLALV).

This sequence belongs to the peptidase M50B family. Zn(2+) serves as cofactor.

Its subcellular location is the cell inner membrane. The protein is Putative zinc metalloprotease PA3649 of Pseudomonas aeruginosa (strain ATCC 15692 / DSM 22644 / CIP 104116 / JCM 14847 / LMG 12228 / 1C / PRS 101 / PAO1).